Here is a 481-residue protein sequence, read N- to C-terminus: 6-phosphogluconate dehydrogenase, decarboxylating (481 aa).

Residues Gly11–Gly16, Asn34–Thr36, Val76–Gly78, and Asn104 each bind NADP(+). Substrate contacts are provided by residues Asn104 and Ser130–Gly132. The active-site Proton acceptor is Lys184. His187–Asn188 provides a ligand contact to substrate. Glu191 acts as the Proton donor in catalysis. Substrate-binding residues include Tyr192, Lys259, Arg286, Arg445, and His451.

Belongs to the 6-phosphogluconate dehydrogenase family. As to quaternary structure, homodimer.

The catalysed reaction is 6-phospho-D-gluconate + NADP(+) = D-ribulose 5-phosphate + CO2 + NADPH. It functions in the pathway carbohydrate degradation; pentose phosphate pathway; D-ribulose 5-phosphate from D-glucose 6-phosphate (oxidative stage): step 3/3. Catalyzes the oxidative decarboxylation of 6-phosphogluconate to ribulose 5-phosphate and CO(2), with concomitant reduction of NADP to NADPH. The protein is 6-phosphogluconate dehydrogenase, decarboxylating (Pgd) of Drosophila simulans (Fruit fly).